A 484-amino-acid chain; its full sequence is MECVRSGALDLGRSGNFLGKSGSTTSCGKVRCSTNLAGSTKCEQNLHGKAKPLLLSASGKARGTSGLVHRSPVLKHQHHLSVRSTSTDVCTTFDEDVKGVSSHAVEEKVGVLLLNLGGPETLNDVQPFLFNLFADPDIIRLPRLFRFLQRPLAKLISTFRAPKSNEGYASIGGGSPLRKITDEQANALKVALKSKNLEADIYVGMRYWYPFTEEAIDQIKKDKITKLVVLPLYPQYSISTSGSSIRVLQNIVKEDPYFAGLPISIIESWYQREGYVKSMADLIEKELSVFSNPEEVMIFFSAHGVPLTYVKDAGDPYRDQMEDCIALIMEELKSRGTLNDHTLAYQSRVGPVQWLKPYTDEVLVELGQKGVKSLLAVPVSFVSEHIETLEEIDMEYRELALESGIENWGRVPALGCTSSFISDLADAVVEALPSASAMATRKVKDTDSDMDMMHYLTKMFLGSVLAFFLLLSPRLVSAFRNTLQ.

Belongs to the ferrochelatase family.

It is found in the plastid. Its subcellular location is the chloroplast. The catalysed reaction is heme b + 2 H(+) = protoporphyrin IX + Fe(2+). Its pathway is porphyrin-containing compound metabolism; protoheme biosynthesis; protoheme from protoporphyrin-IX: step 1/1. In terms of biological role, catalyzes the ferrous insertion into protoporphyrin IX. The chain is Ferrochelatase-2, chloroplastic (HEMH) from Hordeum vulgare (Barley).